Here is a 425-residue protein sequence, read N- to C-terminus: Dihydroorotase (425 aa).

Zn(2+) is bound by residues histidine 56 and histidine 58. Substrate-binding positions include 58-60 (HYR) and asparagine 90. 3 residues coordinate Zn(2+): aspartate 148, histidine 175, and histidine 228. Asparagine 274 is a binding site for substrate. Aspartate 301 lines the Zn(2+) pocket. Aspartate 301 is an active-site residue. Substrate is bound by residues histidine 305 and 319 to 320 (FG).

The protein belongs to the metallo-dependent hydrolases superfamily. DHOase family. Class I DHOase subfamily. The cofactor is Zn(2+).

The enzyme catalyses (S)-dihydroorotate + H2O = N-carbamoyl-L-aspartate + H(+). The protein operates within pyrimidine metabolism; UMP biosynthesis via de novo pathway; (S)-dihydroorotate from bicarbonate: step 3/3. Functionally, catalyzes the reversible cyclization of carbamoyl aspartate to dihydroorotate. This is Dihydroorotase from Lactobacillus johnsonii (strain CNCM I-12250 / La1 / NCC 533).